We begin with the raw amino-acid sequence, 914 residues long: NADH-quinone oxidoreductase subunit G (914 aa).

The region spanning 1–83 (MATIHVDGKE…GTFISIDDSE (83 aa)) is the 2Fe-2S ferredoxin-type domain. [2Fe-2S] cluster contacts are provided by cysteine 34, cysteine 45, cysteine 48, and cysteine 67. The 40-residue stretch at 83–122 (EAKAFRESVVEWLMTNHPHDCPVCEEGGNCHLQDMTVMTG) folds into the 4Fe-4S His(Cys)3-ligated-type domain. [4Fe-4S] cluster is bound by residues histidine 99, cysteine 103, cysteine 106, cysteine 112, cysteine 151, cysteine 154, cysteine 157, cysteine 201, cysteine 228, cysteine 231, cysteine 235, and cysteine 263. Positions 221–277 (MQFAPSICQQCSVGCNTSPGERYGELRRIENRYNGSVNHYFMCDRGRFGYGYVNLKD) constitute a 4Fe-4S Mo/W bis-MGD-type domain.

Belongs to the complex I 75 kDa subunit family. Composed of 13 different subunits. Subunits NuoCD, E, F, and G constitute the peripheral sector of the complex. [2Fe-2S] cluster is required as a cofactor. It depends on [4Fe-4S] cluster as a cofactor.

It catalyses the reaction a quinone + NADH + 5 H(+)(in) = a quinol + NAD(+) + 4 H(+)(out). Functionally, NDH-1 shuttles electrons from NADH, via FMN and iron-sulfur (Fe-S) centers, to quinones in the respiratory chain. The immediate electron acceptor for the enzyme in this species is believed to be ubiquinone. Couples the redox reaction to proton translocation (for every two electrons transferred, four hydrogen ions are translocated across the cytoplasmic membrane), and thus conserves the redox energy in a proton gradient. In Yersinia pestis, this protein is NADH-quinone oxidoreductase subunit G (nuoG).